We begin with the raw amino-acid sequence, 137 residues long: Protein LTO1 homolog (137 aa).

Ala-2 is modified (N-acetylalanine). Ser-4 bears the Phosphoserine mark. Residues 22-58 are deca-GX3 motif; required for interaction with YAE1 and the CIA complex; that stretch reads GYREGYEEGSSLGVMEGRQHGTLHGAKIGSEIGCYQG.

This sequence belongs to the LTO1 family. In terms of assembly, forms a complex with YAE1. Interacts with PYCR1 and PYCR2. As to expression, widely expressed. Highly expressed in placenta, kidney and skeletal muscle.

The protein resides in the nucleus. Functionally, the complex LTO1:YAE1 functions as a target specific adapter that probably recruits apo-ABCE1 to the cytosolic iron-sulfur protein assembly (CIA) complex machinery. May be required for biogenesis of the large ribosomal subunit and initiation of translation. May play a role in the regulation of proline metabolism and ROS production. The chain is Protein LTO1 homolog from Homo sapiens (Human).